The chain runs to 340 residues: Ketol-acid reductoisomerase (NADP(+)) (340 aa).

Positions 3-182 (VTMYYEEDVE…GCARVGIIET (180 aa)) constitute a KARI N-terminal Rossmann domain. Residues 26-29 (YGSQ), arginine 49, serine 53, and 83-86 (DELQ) each bind NADP(+). Histidine 108 is a catalytic residue. Glycine 134 lines the NADP(+) pocket. One can recognise a KARI C-terminal knotted domain in the interval 183–328 (TFKEETEEDL…AELRKAMPFT (146 aa)). Mg(2+) is bound by residues aspartate 191, glutamate 195, glutamate 227, and glutamate 231. Serine 252 provides a ligand contact to substrate.

This sequence belongs to the ketol-acid reductoisomerase family. It depends on Mg(2+) as a cofactor.

It catalyses the reaction (2R)-2,3-dihydroxy-3-methylbutanoate + NADP(+) = (2S)-2-acetolactate + NADPH + H(+). The enzyme catalyses (2R,3R)-2,3-dihydroxy-3-methylpentanoate + NADP(+) = (S)-2-ethyl-2-hydroxy-3-oxobutanoate + NADPH + H(+). The protein operates within amino-acid biosynthesis; L-isoleucine biosynthesis; L-isoleucine from 2-oxobutanoate: step 2/4. Its pathway is amino-acid biosynthesis; L-valine biosynthesis; L-valine from pyruvate: step 2/4. Its function is as follows. Involved in the biosynthesis of branched-chain amino acids (BCAA). Catalyzes an alkyl-migration followed by a ketol-acid reduction of (S)-2-acetolactate (S2AL) to yield (R)-2,3-dihydroxy-isovalerate. In the isomerase reaction, S2AL is rearranged via a Mg-dependent methyl migration to produce 3-hydroxy-3-methyl-2-ketobutyrate (HMKB). In the reductase reaction, this 2-ketoacid undergoes a metal-dependent reduction by NADPH to yield (R)-2,3-dihydroxy-isovalerate. The polypeptide is Ketol-acid reductoisomerase (NADP(+)) (Lactococcus lactis subsp. cremoris (strain MG1363)).